A 466-amino-acid polypeptide reads, in one-letter code: Communesin N16 acyltransferase cnsK (466 aa).

This sequence belongs to the fumigaclavine B O-acetyltransferase family.

It participates in alkaloid biosynthesis. In terms of biological role, communesin N16 acyltransferase; part of the gene cluster that mediates the biosynthesis of communesins, a prominent class of indole alkaloids with great potential as pharmaceuticals. Communesins are biosynthesized by the coupling of tryptamine and aurantioclavine, two building blocks derived from L-tryptophan. The L-tryptophan decarboxylase cnsB converts L-tryptophan to tryptamine, whereas the tryptophan dimethylallyltransferase cnsF converts L-tryptophan to 4-dimethylallyl tryptophan which is further transformed to aurantioclavine by the aurantioclavine synthase cnsA, probably aided by the catalase cnsD. The cytochrome P450 monooxygenase cnsC catalyzes the heterodimeric coupling between the two different indole moieties, tryptamine and aurantioclavine, to construct vicinal quaternary stereocenters and yield the heptacyclic communesin scaffold. The O-methyltransferase cnsE then methylates the communesin scaffold to produce communesin K, the simplest characterized communesin that contains the heptacyclic core. The dioxygenase cnsJ converts communesin K into communesin I. Acylation to introduce the hexadienyl group at position N16 of communesin I by the acyltransferase cnsK leads to the production of communesin B. The hexadienyl group is produced by the highly reducing polyketide synthase cnsI, before being hydrolytically removed from cnsI by the serine hydrolase cnsH, converted into hexadienyl-CoA by the CoA ligase cnsG, and then transferred to communesin I by cnsK. Surprisingly, cnsK may also be a promiscuous acyltransferase that can tolerate a range of acyl groups, including acetyl-, propionyl-, and butyryl-CoA, which lead to communesins A, G and H respectively. The roles of the alpha-ketoglutarate-dependent dioxygenases cnsM and cnsP have still to be determined. The protein is Communesin N16 acyltransferase cnsK of Penicillium expansum (Blue mold rot fungus).